The primary structure comprises 542 residues: CTP synthase (542 aa).

The segment at 1–265 is amidoligase domain; it reads MTRYIFVTGG…DDFVVERFGL (265 aa). Serine 13 contributes to the CTP binding site. Serine 13 lines the UTP pocket. ATP contacts are provided by residues 14–19 and aspartate 71; that span reads SLGKGI. The Mg(2+) site is built by aspartate 71 and glutamate 139. Residues 146 to 148, 186 to 191, and lysine 222 contribute to the CTP site; these read DIE and KTKPTQ. Residues 186–191 and lysine 222 each bind UTP; that span reads KTKPTQ. The Glutamine amidotransferase type-1 domain occupies 290–541; that stretch reads TIAMVGKYME…VKAALAQKNK (252 aa). Residue glycine 351 participates in L-glutamine binding. Cysteine 378 functions as the Nucleophile; for glutamine hydrolysis in the catalytic mechanism. Residues 379–382, glutamate 402, and arginine 469 each bind L-glutamine; that span reads LGMQ. Catalysis depends on residues histidine 514 and glutamate 516.

This sequence belongs to the CTP synthase family. As to quaternary structure, homotetramer.

It carries out the reaction UTP + L-glutamine + ATP + H2O = CTP + L-glutamate + ADP + phosphate + 2 H(+). It catalyses the reaction L-glutamine + H2O = L-glutamate + NH4(+). The catalysed reaction is UTP + NH4(+) + ATP = CTP + ADP + phosphate + 2 H(+). Its pathway is pyrimidine metabolism; CTP biosynthesis via de novo pathway; CTP from UDP: step 2/2. Its activity is regulated as follows. Allosterically activated by GTP, when glutamine is the substrate; GTP has no effect on the reaction when ammonia is the substrate. The allosteric effector GTP functions by stabilizing the protein conformation that binds the tetrahedral intermediate(s) formed during glutamine hydrolysis. Inhibited by the product CTP, via allosteric rather than competitive inhibition. Functionally, catalyzes the ATP-dependent amination of UTP to CTP with either L-glutamine or ammonia as the source of nitrogen. Regulates intracellular CTP levels through interactions with the four ribonucleotide triphosphates. The sequence is that of CTP synthase from Pseudomonas putida (strain ATCC 700007 / DSM 6899 / JCM 31910 / BCRC 17059 / LMG 24140 / F1).